We begin with the raw amino-acid sequence, 154 residues long: 17 kDa surface antigen (154 aa).

The signal sequence occupies residues 1–19 (MKLLSKIMVIALATSMLQA). Cys20 is lipidated: N-palmitoyl cysteine. Cys20 carries the S-diacylglycerol cysteine lipid modification.

The protein belongs to the rickettsiale 17 kDa surface antigen family.

The protein localises to the cell outer membrane. The chain is 17 kDa surface antigen (omp) from Rickettsia parkeri.